Consider the following 680-residue polypeptide: Translation factor GUF1 homolog, chloroplastic (680 aa).

The N-terminal 51 residues, 1–51 (MATATASRLAVPAPRTSPQAPGRRRPAAPLPSAPPRPRALSAAPRGRVVCP), are a transit peptide targeting the chloroplast. Residues 1-68 (MATATASRLA…ASTTDAGQDR (68 aa)) form a disordered region. A compositionally biased stretch (pro residues) spans 28–37 (APLPSAPPRP). Over residues 38–60 (RALSAAPRGRVVCPAAPASSPAS) the composition is skewed to low complexity. Residues 75-256 (SNIRNFSIIA…AIVTKIPPPQ (182 aa)) enclose the tr-type G domain. GTP-binding positions include 84-91 (AHIDHGKS), 149-153 (DTPGH), and 203-206 (NKID).

The protein belongs to the TRAFAC class translation factor GTPase superfamily. Classic translation factor GTPase family. LepA subfamily.

It is found in the plastid. Its subcellular location is the chloroplast. The catalysed reaction is GTP + H2O = GDP + phosphate + H(+). Promotes chloroplast protein synthesis. May act as a fidelity factor of the translation reaction, by catalyzing a one-codon backward translocation of tRNAs on improperly translocated ribosomes. This is Translation factor GUF1 homolog, chloroplastic from Oryza sativa subsp. japonica (Rice).